Reading from the N-terminus, the 196-residue chain is Purpurin (196 aa).

The first 21 residues, 1–21, serve as a signal peptide directing secretion; sequence MKYAQYVFLASIFSAVEYSLA. 3 cysteine pairs are disulfide-bonded: C24–C182, C90–C196, and C142–C151.

Belongs to the calycin superfamily. Lipocalin family.

Its subcellular location is the secreted. It is found in the extracellular space. The protein localises to the extracellular matrix. The protein resides in the interphotoreceptor matrix. Functionally, may be involved in the transport of retinol between the photoreceptors and the pigmented epithelium. This Gallus gallus (Chicken) protein is Purpurin.